Here is a 218-residue protein sequence, read N- to C-terminus: Thiopurine S-methyltransferase (218 aa).

Residues Trp10, Leu45, Glu66, and Arg123 each coordinate S-adenosyl-L-methionine.

Belongs to the class I-like SAM-binding methyltransferase superfamily. TPMT family.

It is found in the cytoplasm. The enzyme catalyses S-adenosyl-L-methionine + a thiopurine = S-adenosyl-L-homocysteine + a thiopurine S-methylether.. The protein is Thiopurine S-methyltransferase of Shewanella sp. (strain W3-18-1).